Consider the following 117-residue polypeptide: Large ribosomal subunit protein bL20c (117 aa).

The protein belongs to the bacterial ribosomal protein bL20 family.

It localises to the plastid. It is found in the chloroplast. Functionally, binds directly to 23S ribosomal RNA and is necessary for the in vitro assembly process of the 50S ribosomal subunit. It is not involved in the protein synthesizing functions of that subunit. In Buxus microphylla (Littleleaf boxwood), this protein is Large ribosomal subunit protein bL20c.